A 491-amino-acid polypeptide reads, in one-letter code: Probable CtpA-like serine protease (491 aa).

The disordered stretch occupies residues 1–22 (MNDHQKNHATSQDDNTKSTPSK). The span at 8 to 22 (HATSQDDNTKSTPSK) shows a compositional bias: polar residues. The chain crosses the membrane as a helical span at residues 31 to 51 (LWHFILVILGIILLTSIITVV). Positions 119–201 (TKQFNEGVSG…TYVTLTIKRG (83 aa)) constitute a PDZ domain. Active-site charge relay system residues include S324, D335, and K349.

Belongs to the peptidase S41A family.

The protein localises to the cell membrane. This chain is Probable CtpA-like serine protease, found in Staphylococcus epidermidis (strain ATCC 35984 / DSM 28319 / BCRC 17069 / CCUG 31568 / BM 3577 / RP62A).